Here is a 270-residue protein sequence, read N- to C-terminus: 4-hydroxy-tetrahydrodipicolinate reductase (270 aa).

NAD(+) is bound by residues 8-13 (GAAGRM) and Glu34. Arg35 provides a ligand contact to NADP(+). Residues 98-100 (GST) and 122-125 (SPNM) each bind NAD(+). The active-site Proton donor/acceptor is His155. His156 lines the (S)-2,3,4,5-tetrahydrodipicolinate pocket. Lys159 serves as the catalytic Proton donor. 165–166 (GT) is a (S)-2,3,4,5-tetrahydrodipicolinate binding site.

It belongs to the DapB family.

Its subcellular location is the cytoplasm. The enzyme catalyses (S)-2,3,4,5-tetrahydrodipicolinate + NAD(+) + H2O = (2S,4S)-4-hydroxy-2,3,4,5-tetrahydrodipicolinate + NADH + H(+). It catalyses the reaction (S)-2,3,4,5-tetrahydrodipicolinate + NADP(+) + H2O = (2S,4S)-4-hydroxy-2,3,4,5-tetrahydrodipicolinate + NADPH + H(+). It functions in the pathway amino-acid biosynthesis; L-lysine biosynthesis via DAP pathway; (S)-tetrahydrodipicolinate from L-aspartate: step 4/4. Its function is as follows. Catalyzes the conversion of 4-hydroxy-tetrahydrodipicolinate (HTPA) to tetrahydrodipicolinate. The polypeptide is 4-hydroxy-tetrahydrodipicolinate reductase (Anaeromyxobacter dehalogenans (strain 2CP-C)).